A 1661-amino-acid polypeptide reads, in one-letter code: ATP-dependent bile acid permease (1661 aa).

Residues 1–33 (MHHVLNSTRPDHRFWFYDDVTQYGRTKYLNYYT) are Lumenal-facing. A glycan (N-linked (GlcNAc...) asparagine) is linked at Asn-6. Residues 34–54 (PLVLLIFTVLFITYNIWKHYY) form a helical membrane-spanning segment. At 55-74 (YYDVLHLKQKNPIDELLYSS) the chain is on the cytoplasmic side. The chain crosses the membrane as a helical span at residues 75 to 95 (TDEDEQSPLINNNTITTNYVD). The Lumenal segment spans residues 96–133 (NNCTKDALKNRHFSLEKLKSVKVNGEPHGTPEIVRRGF). Asn-97 carries an N-linked (GlcNAc...) asparagine glycan. A helical membrane pass occupies residues 134-154 (IEKSRIILEFFLVLSQVIIHS). Topologically, residues 155-166 (FILLHYVNKNPE) are cytoplasmic. A helical membrane pass occupies residues 167 to 187 (FTQQGTITGLVEWCALFIIVS). Topologically, residues 188 to 205 (LRLANVNQNFKFINKYPG) are lumenal. A helical transmembrane segment spans residues 206 to 226 (NLWSVSFINYLALFISMILPF). Over 227-345 (RSIFIHHINS…VKRKRIFSLN (119 aa)) the chain is Cytoplasmic. The helical transmembrane segment at 346-366 (LFFFFSNYLVLQCFWAFLGSV) threads the bilayer. In terms of domain architecture, ABC transmembrane type-1 1 spans 354–662 (LVLQCFWAFL…LSDMLSFVVQ (309 aa)). Over 367-393 (LSFIPTVLLKRILEYVEDQSSAPSNLA) the chain is Lumenal. Residues 394-414 (WFYVTVMFVGRILVAICQAQA) form a helical membrane-spanning segment. Residues 415–495 (LFFGRRVCIR…AFKVSEICGY (81 aa)) lie on the Cytoplasmic side of the membrane. The disordered stretch occupies residues 445–468 (NKTKPSNEDPQEINDQKSINGDEE). Residues 496 to 516 (LHSFLEAFVMTVVALALLYRL) traverse the membrane as a helical segment. The Lumenal segment spans residues 517-519 (LGF). Residues 520 to 540 (AAIVGVLIIVAMLPLNYKLAK) traverse the membrane as a helical segment. Topologically, residues 541–602 (YIGDLQKKNL…LLLMRSIVWS (62 aa)) are cytoplasmic. A helical transmembrane segment spans residues 603 to 623 (ISSFLWFVTPTIVTAASFAYY). Residues 624–644 (IYVQGEVLTTPVAFTALSLFT) lie on the Lumenal side of the membrane. The helical transmembrane segment at 645 to 665 (LLRDPLDRLSDMLSFVVQSKV) threads the bilayer. Residues 666-1053 (SLDRVQDFLN…SWWVRAWASH (388 aa)) are Cytoplasmic-facing. In terms of domain architecture, ABC transporter 1 spans 694–935 (FAFENSTISW…GLFGEDELVK (242 aa)). 729–736 (GPTGSGKT) lines the ATP pocket. Ser-936, Ser-940, and Ser-955 each carry phosphoserine. Residues 1026–1345 (VSFLASLFLI…LVRLYSEVEM (320 aa)) enclose the ABC transmembrane type-1 2 domain. Residues 1054 to 1074 (NVIAKIIPRAQRAIAFISKKA) form a helical membrane-spanning segment. At 1075 to 1114 (SHLIDWRGSSQISMASAENQPSSGHSTMYYLVLYLIIGFA) the chain is on the lumenal side. Residues 1115 to 1135 (QALLGAGKTILNFVAGINASR) form a helical membrane-spanning segment. The Cytoplasmic segment spans residues 1136-1178 (KIFNMILNKVLHSKIRFFDATPTGRIMNRFSKDIEAIDQELTP). A helical transmembrane segment spans residues 1179–1199 (YIQGAFYSLIECLSTVILITF). A topological domain (lumenal) is located at residue Ile-1200. A helical transmembrane segment spans residues 1201-1221 (TPQFLSVAIVVSILYYFVGYF). Residues 1222–1292 (YMAGSRELKR…VANRWLAFRI (71 aa)) lie on the Cytoplasmic side of the membrane. The chain crosses the membrane as a helical span at residues 1293-1313 (DMIGSLVIFGAGLFILFNINN). Topologically, residues 1314-1315 (LD) are lumenal. A helical transmembrane segment spans residues 1316–1336 (SGMAGISLTYAISFTEGALWL). Topologically, residues 1337-1661 (VRLYSEVEMN…FVEKLNSKKD (325 aa)) are cytoplasmic. The ABC transporter 2 domain maps to 1381 to 1636 (IEVNDLSLRY…KQSAFYSMCE (256 aa)). 1415-1422 (GRTGAGKS) is a binding site for ATP.

Belongs to the ABC transporter superfamily. ABCC family. Conjugate transporter (TC 3.A.1.208) subfamily.

The protein resides in the vacuole membrane. Vacuolar class C ABC transporter which regulates the translocation of phosphatidylcholine to the vacuole lumen, the release of lumenal calcium stores, and acts as a negative regulator of vacuole fusion. Exhibits ATP-dependent bile acid transport. The polypeptide is ATP-dependent bile acid permease (YBT1) (Saccharomyces cerevisiae (strain ATCC 204508 / S288c) (Baker's yeast)).